A 734-amino-acid polypeptide reads, in one-letter code: Elongation factor G, mitochondrial (734 aa).

Residues 1-32 (MTSFLTSRFGGLALRNVMNNKNGINSFGLRCF) constitute a mitochondrion transit peptide. One can recognise a tr-type G domain in the interval 38 to 318 (SGLRNIGISA…GVIKYLPSPN (281 aa)). Residues 47–54 (AHIDSGKT), 114–118 (DTPGH), and 168–171 (NKLD) each bind GTP.

It belongs to the TRAFAC class translation factor GTPase superfamily. Classic translation factor GTPase family. EF-G/EF-2 subfamily.

It is found in the mitochondrion. It carries out the reaction GTP + H2O = GDP + phosphate + H(+). It participates in protein biosynthesis; polypeptide chain elongation. Mitochondrial GTPase that catalyzes the GTP-dependent ribosomal translocation step during translation elongation. During this step, the ribosome changes from the pre-translocational (PRE) to the post-translocational (POST) state as the newly formed A-site-bound peptidyl-tRNA and P-site-bound deacylated tRNA move to the P and E sites, respectively. Catalyzes the coordinated movement of the two tRNA molecules, the mRNA and conformational changes in the ribosome. In Dictyostelium discoideum (Social amoeba), this protein is Elongation factor G, mitochondrial (gfm1).